The primary structure comprises 257 residues: tRNA (guanine-N(1)-)-methyltransferase (257 aa).

Residues Gly-112 and 136–141 (LGDYVL) each bind S-adenosyl-L-methionine.

It belongs to the RNA methyltransferase TrmD family. Homodimer.

It localises to the cytoplasm. The catalysed reaction is guanosine(37) in tRNA + S-adenosyl-L-methionine = N(1)-methylguanosine(37) in tRNA + S-adenosyl-L-homocysteine + H(+). In terms of biological role, specifically methylates guanosine-37 in various tRNAs. This chain is tRNA (guanine-N(1)-)-methyltransferase, found in Salinispora tropica (strain ATCC BAA-916 / DSM 44818 / JCM 13857 / NBRC 105044 / CNB-440).